We begin with the raw amino-acid sequence, 863 residues long: Scm-like with four MBT domains protein 1 (863 aa).

MBT repeat units lie at residues 20 to 120 (FSWE…LEAP), 128 to 232 (SDWN…LQPP), 242 to 346 (ADWQ…INPP), and 354 to 451 (FDWA…LSTP). Residues 638-773 (KKKNKRIGRP…SDDENKPPSP (136 aa)) are disordered. The segment covering 660-679 (KSSKRRKRRKNIFVHKKKRS) has biased composition (basic residues). Positions 680-691 (SASVDNTPVGSP) are enriched in polar residues. Composition is skewed to acidic residues over residues 696–710 (GEDEEDADDGDEDSL) and 718–727 (QQEELQEESE). Residues 734 to 744 (SSSSPTQSETP) show a composition bias toward low complexity. Phosphoserine is present on residues Ser-764 and Ser-772. The SAM domain maps to 793–861 (WSVADVVRFI…RIKFAFYEQF (69 aa)).

Interacts with MYOD1. Component of the SLC (SFMBT1-LSD1-CoREST) corepressor complex, which also contains KDM1A/LSD1 and RCOR1/CoREST. Interacts with KDM1A/LSD1 and RCOR1/CoREST. Interacts with MYOD1. Interacts with L3MBTL3. As to expression, highly expressed in the testis, low expression is detected in brain, kidney, heart and lung. Highly expressed in germ cells, where it associates with the synaptic regions of meiotic chromosomes in pachytene stage spermatocytes.

It is found in the nucleus. Functionally, histone-binding protein, which is part of various corepressor complexes. Mediates the recruitment of corepressor complexes to target genes, followed by chromatin compaction and repression of transcription. Plays a role during myogenesis: required for the maintenance of undifferentiated states of myogenic progenitor cells via interaction with MYOD1. Interaction with MYOD1 leads to the recruitment of associated corepressors and silencing of MYOD1 target genes. Part of the SLC complex in germ cells, where it may play a role during spermatogenesis. This is Scm-like with four MBT domains protein 1 (Sfmbt1) from Mus musculus (Mouse).